The primary structure comprises 514 residues: UDP-N-acetylmuramyl-tripeptide synthetase (514 aa).

UDP-N-acetyl-alpha-D-muramoyl-L-alanyl-D-glutamate is bound by residues leucine 44 and serine 46. Residue 129 to 135 coordinates ATP; that stretch reads GTNGKTS. UDP-N-acetyl-alpha-D-muramoyl-L-alanyl-D-glutamate contacts are provided by residues 171–172, serine 198, and arginine 206; that span reads TT. Position 238 is an N6-carboxylysine (lysine 238).

Belongs to the MurCDEF family. MurE subfamily. Carboxylation is probably crucial for Mg(2+) binding and, consequently, for the gamma-phosphate positioning of ATP.

It localises to the cytoplasm. It participates in cell wall biogenesis; peptidoglycan biosynthesis. Its function is as follows. Catalyzes the addition of an amino acid to the nucleotide precursor UDP-N-acetylmuramoyl-L-alanyl-D-glutamate (UMAG) in the biosynthesis of bacterial cell-wall peptidoglycan. The polypeptide is UDP-N-acetylmuramyl-tripeptide synthetase (Leifsonia xyli subsp. xyli (strain CTCB07)).